The chain runs to 400 residues: NADH-quinone oxidoreductase subunit D (400 aa).

It belongs to the complex I 49 kDa subunit family. In terms of assembly, NDH-1 is composed of 14 different subunits. Subunits NuoB, C, D, E, F, and G constitute the peripheral sector of the complex.

It localises to the cell inner membrane. The enzyme catalyses a quinone + NADH + 5 H(+)(in) = a quinol + NAD(+) + 4 H(+)(out). NDH-1 shuttles electrons from NADH, via FMN and iron-sulfur (Fe-S) centers, to quinones in the respiratory chain. The immediate electron acceptor for the enzyme in this species is believed to be a menaquinone. Couples the redox reaction to proton translocation (for every two electrons transferred, four hydrogen ions are translocated across the cytoplasmic membrane), and thus conserves the redox energy in a proton gradient. The chain is NADH-quinone oxidoreductase subunit D from Chlorobaculum parvum (strain DSM 263 / NCIMB 8327) (Chlorobium vibrioforme subsp. thiosulfatophilum).